The sequence spans 369 residues: Protein RecA (369 aa).

66 to 73 (GPESSGKT) is an ATP binding site. Residues 328–369 (GIDAESLEEKEDPEKVKEQRAKKAAPGEEKPAEPASPEKTDK) are disordered. The span at 339-369 (DPEKVKEQRAKKAAPGEEKPAEPASPEKTDK) shows a compositional bias: basic and acidic residues.

This sequence belongs to the RecA family.

The protein localises to the cytoplasm. Its function is as follows. Can catalyze the hydrolysis of ATP in the presence of single-stranded DNA, the ATP-dependent uptake of single-stranded DNA by duplex DNA, and the ATP-dependent hybridization of homologous single-stranded DNAs. It interacts with LexA causing its activation and leading to its autocatalytic cleavage. The sequence is that of Protein RecA from Lactobacillus delbrueckii subsp. bulgaricus (strain ATCC BAA-365 / Lb-18).